A 159-amino-acid chain; its full sequence is Putative pre-16S rRNA nuclease (159 aa).

It belongs to the YqgF nuclease family.

The protein resides in the cytoplasm. Functionally, could be a nuclease involved in processing of the 5'-end of pre-16S rRNA. The chain is Putative pre-16S rRNA nuclease from Synechococcus sp. (strain JA-3-3Ab) (Cyanobacteria bacterium Yellowstone A-Prime).